A 432-amino-acid polypeptide reads, in one-letter code: Adenylosuccinate synthetase (432 aa).

GTP is bound by residues 13-19 (GDEGKGK) and 41-43 (GHT). Asp14 (proton acceptor) is an active-site residue. 2 residues coordinate Mg(2+): Asp14 and Gly41. Residues 14–17 (DEGK), 39–42 (NAGH), Thr130, Arg144, Gln225, Thr240, and Arg304 each bind IMP. His42 acts as the Proton donor in catalysis. 300–306 (AVTGRPR) serves as a coordination point for substrate. Residues Arg306, 332–334 (KLD), and 415–417 (STG) each bind GTP.

This sequence belongs to the adenylosuccinate synthetase family. Homodimer. Mg(2+) is required as a cofactor.

It is found in the cytoplasm. The enzyme catalyses IMP + L-aspartate + GTP = N(6)-(1,2-dicarboxyethyl)-AMP + GDP + phosphate + 2 H(+). The protein operates within purine metabolism; AMP biosynthesis via de novo pathway; AMP from IMP: step 1/2. In terms of biological role, plays an important role in the de novo pathway of purine nucleotide biosynthesis. Catalyzes the first committed step in the biosynthesis of AMP from IMP. This is Adenylosuccinate synthetase from Haemophilus ducreyi (strain 35000HP / ATCC 700724).